A 21-amino-acid polypeptide reads, in one-letter code: Dahlein-5.2 (21 aa).

As to expression, expressed by the skin dorsal glands.

The protein resides in the secreted. Its function is as follows. Has no antimicrobial activity. Strongly inhibits the formation of NO by neuronal nitric oxide synthase at micromolar concentrations. This Ranoidea dahlii (Dahl's aquatic frog) protein is Dahlein-5.2.